Reading from the N-terminus, the 30-residue chain is uncharacterized protein (30 aa).

This is an uncharacterized protein from Bacillus subtilis (strain 168).